A 211-amino-acid polypeptide reads, in one-letter code: Uracil phosphoribosyltransferase (211 aa).

Residues Arg-79, Arg-104, and 131 to 139 each bind 5-phospho-alpha-D-ribose 1-diphosphate; that span reads DPMLATGGS. Uracil-binding positions include Ile-196 and 201–203; that span reads GDA. Asp-202 is a binding site for 5-phospho-alpha-D-ribose 1-diphosphate.

It belongs to the UPRTase family. Mg(2+) is required as a cofactor.

The enzyme catalyses UMP + diphosphate = 5-phospho-alpha-D-ribose 1-diphosphate + uracil. It functions in the pathway pyrimidine metabolism; UMP biosynthesis via salvage pathway; UMP from uracil: step 1/1. Its activity is regulated as follows. Allosterically activated by GTP. Functionally, catalyzes the conversion of uracil and 5-phospho-alpha-D-ribose 1-diphosphate (PRPP) to UMP and diphosphate. The chain is Uracil phosphoribosyltransferase from Limosilactobacillus fermentum (strain NBRC 3956 / LMG 18251) (Lactobacillus fermentum).